The sequence spans 295 residues: 4-diphosphocytidyl-2-C-methyl-D-erythritol kinase (295 aa).

K10 is an active-site residue. 97–107 (PIGSGLGGASS) is an ATP binding site. Residue D139 is part of the active site.

This sequence belongs to the GHMP kinase family. IspE subfamily. As to quaternary structure, homodimer.

The catalysed reaction is 4-CDP-2-C-methyl-D-erythritol + ATP = 4-CDP-2-C-methyl-D-erythritol 2-phosphate + ADP + H(+). It participates in isoprenoid biosynthesis; isopentenyl diphosphate biosynthesis via DXP pathway; isopentenyl diphosphate from 1-deoxy-D-xylulose 5-phosphate: step 3/6. Its function is as follows. Catalyzes the phosphorylation of the position 2 hydroxy group of 4-diphosphocytidyl-2C-methyl-D-erythritol. The protein is 4-diphosphocytidyl-2-C-methyl-D-erythritol kinase of Blochmanniella pennsylvanica (strain BPEN).